Consider the following 186-residue polypeptide: Protein TRL14 (186 aa).

N-linked (GlcNAc...) asparagine; by host glycans are attached at residues asparagine 24, asparagine 64, and asparagine 72. A helical membrane pass occupies residues 143–163; that stretch reads HAVWAGVVVSVALIALYMGSH.

It belongs to the RL11 family.

The protein resides in the virion membrane. This is Protein TRL14 from Human cytomegalovirus (strain AD169) (HHV-5).